Reading from the N-terminus, the 721-residue chain is MASFKGFSVNTVPVSKAKRDISSLAATPGIRSQPFTPSVDMSQSREFLTKAIEQGSMSIPYQHVNVPKVDRKVVSLVVRPFSSGAFSISGVISPAHAYLLDCLPQLEQAMAFVASPESFQASDVAKRFAIKPGMSLQDAITAFINFVSAMLKMTVTRQNFDVIVAEIERLASTSVSVRTEEAKVADEELMLFGLDHRGPQQLDISNAKGIMKAADIQATHDVHLAPGVGNIDPEIYNEGRFMFMQHKPLAADQSYFTLETADYFKIYPTYDEHDSRMADQKQSGLILCTKDEVLAEQTIFKLDAPDDKTVHLLDRDDDHVVARFTKVFIEDVAPGHHAAQRSGQRSVLDDLYANTQVVSITSAALKWVVKHGVSDGIVNRKNVKVCVGFDPLYTLSTHNGVSLCALLMDEKLSVLNSACRMTLRSLMKTGRDADAHRAFQRVLSQGYASLMCYYHPSRKLAYGEVLFLERSSDMVDGIKLQLDASRQCHECPVLQQKVVELEKQIIMQKSIQSDPTPMALQPLLSQLRELSSEVTRLQMELSRTQSLNAQLEADAKSAQACSLDMYLRHHTCINGHTKEDELLDAVRVAPDVRKEIMEKRGEVRRGWCERISKEAAAKCQTVIDDLTQMNGKQAREITELRESAENYEKQIAELVGTITQNQMTYQQELQALVAKNVELDTMNQRQAKSLRITPSLLSATPIDSVDGAADLIDFSVPTDEL.

The interval 1-13 is interaction with sigma-NS; sequence MASFKGFSVNTVP. An RNA-binding region spans residues 1–38; that stretch reads MASFKGFSVNTVPVSKAKRDISSLAATPGIRSQPFTPS. The segment at 14–40 is interaction with mu-2; sequence VSKAKRDISSLAATPGIRSQPFTPSVD. Residues 471–721 form an involved in the formation of factory-like inclusions region; sequence SSDMVDGIKL…IDFSVPTDEL (251 aa). Coiled-coil stretches lie at residues 523-560 and 628-686; these read LLSQ…SAQA and QMNG…NQRQ.

Belongs to the orthoreovirus mu-NS protein family. Interacts with mu-2. Interacts with sigma-NS; in viral factories. Interacts with the inner capsid proteins lambda-1 and sigma-2, and outer capsid protein lambda-2; in viral factories. In terms of processing, the N-terminus is blocked.

It is found in the host cytoplasm. Its function is as follows. Non-structural protein implicated with protein sigma-NS in forming the matrix of viral factories, which are large inclusions in the host cytoplasm where replication intermediates are assembled and viral RNA replication takes place. Together with mu-2, recruits the other core proteins to these factories. This is Protein mu-NS (M3) from Mammalia (T1L).